A 320-amino-acid polypeptide reads, in one-letter code: uncharacterized protein (320 aa).

The region spanning 13–132 (ALVLKSLLRE…VLYPEIPSPE (120 aa)) is the Arf-GAP domain. The C4-type zinc finger occupies 28–52 (CADCKRNEQPRWASWNLGVFICIRC). 3 disordered regions span residues 153–212 (NTAS…STRQ), 227–261 (RPQV…YGAF), and 284–320 (NVTS…DVWK). Over residues 154–176 (TASRSSSAHSVKSTSSATVTNVT) the composition is skewed to low complexity. Composition is skewed to polar residues over residues 183-210 (SATT…APST) and 228-244 (PQVS…YQNL). Composition is skewed to low complexity over residues 245-257 (PSPV…SSQP) and 295-310 (SPVQ…SLDS).

It localises to the cytoplasm. The protein resides in the golgi apparatus. In terms of biological role, GTPase-activating protein for the ADP ribosylation factor family. This is an uncharacterized protein from Schizosaccharomyces pombe (strain 972 / ATCC 24843) (Fission yeast).